We begin with the raw amino-acid sequence, 121 residues long: Small ribosomal subunit protein uS13 (121 aa).

Positions 91–121 are disordered; sequence HRRGLPVRGQKTKNNARTRKGPVKTVANKKK.

The protein belongs to the universal ribosomal protein uS13 family. In terms of assembly, part of the 30S ribosomal subunit. Forms a loose heterodimer with protein S19. Forms two bridges to the 50S subunit in the 70S ribosome.

Located at the top of the head of the 30S subunit, it contacts several helices of the 16S rRNA. In the 70S ribosome it contacts the 23S rRNA (bridge B1a) and protein L5 of the 50S subunit (bridge B1b), connecting the 2 subunits; these bridges are implicated in subunit movement. Contacts the tRNAs in the A and P-sites. This Staphylococcus carnosus (strain TM300) protein is Small ribosomal subunit protein uS13.